The following is a 178-amino-acid chain: Large ribosomal subunit protein uL6 (178 aa).

The protein belongs to the universal ribosomal protein uL6 family. In terms of assembly, part of the 50S ribosomal subunit.

In terms of biological role, this protein binds to the 23S rRNA, and is important in its secondary structure. It is located near the subunit interface in the base of the L7/L12 stalk, and near the tRNA binding site of the peptidyltransferase center. The protein is Large ribosomal subunit protein uL6 of Campylobacter lari (strain RM2100 / D67 / ATCC BAA-1060).